A 676-amino-acid polypeptide reads, in one-letter code: RNA helicase NPH-II (676 aa).

In terms of domain architecture, Helicase ATP-binding spans 172 to 347; sequence FSAWISHRPV…VFLPNPAFIH (176 aa). Position 185–192 (185–192) interacts with ATP; it reads GGTGVGKT. The DEXH box signature appears at 296-299; sequence DEVH. The region spanning 366-535 is the Helicase C-terminal domain; it reads NPSSRMAYIE…NYILYANKFN (170 aa).

This sequence belongs to the DEAD box helicase family. DEAH subfamily. In terms of assembly, monomer.

The protein resides in the virion. It catalyses the reaction ATP + H2O = ADP + phosphate + H(+). NTP-dependent helicase that catalyzes unidirectional unwinding of 3'tailed duplex RNAs and plays an important role during transcription of early mRNAs, presumably by preventing R-loop formation behind the elongating RNA polymerase. Might also play a role in the export of newly synthesized mRNA chains out of the core into the cytoplasm. Required for replication and propagation of viral particles. The sequence is that of RNA helicase NPH-II (OPG084) from Homo sapiens (Human).